Consider the following 338-residue polypeptide: MYG1 protein YER156C (338 aa).

It belongs to the MYG1 family.

The chain is MYG1 protein YER156C from Saccharomyces cerevisiae (strain ATCC 204508 / S288c) (Baker's yeast).